We begin with the raw amino-acid sequence, 211 residues long: Glycerol-3-phosphate acyltransferase (211 aa).

A run of 4 helical transmembrane segments spans residues 5–25 (ALGMMLIAYLCGSISSAILFC), 80–100 (PLYLGLTAIAACLGHIYPVFF), 112–132 (FGAIAPIGWDLTGLMTGTWLL), and 138–158 (GYSSLGAIVSALIAPFYVWWF).

This sequence belongs to the PlsY family. As to quaternary structure, probably interacts with PlsX.

The protein resides in the cell inner membrane. The enzyme catalyses an acyl phosphate + sn-glycerol 3-phosphate = a 1-acyl-sn-glycero-3-phosphate + phosphate. It participates in lipid metabolism; phospholipid metabolism. Its function is as follows. Catalyzes the transfer of an acyl group from acyl-phosphate (acyl-PO(4)) to glycerol-3-phosphate (G3P) to form lysophosphatidic acid (LPA). This enzyme utilizes acyl-phosphate as fatty acyl donor, but not acyl-CoA or acyl-ACP. The chain is Glycerol-3-phosphate acyltransferase from Pectobacterium carotovorum subsp. carotovorum (strain PC1).